A 150-amino-acid polypeptide reads, in one-letter code: UPF0756 membrane protein YPN_1328 (150 aa).

Transmembrane regions (helical) follow at residues 16–36 (ALGI…LIAI), 51–71 (YGLT…IASG), 88–108 (ILAI…VSLM), and 114–134 (VVAG…GVPV).

Belongs to the UPF0756 family.

The protein localises to the cell membrane. This chain is UPF0756 membrane protein YPN_1328, found in Yersinia pestis bv. Antiqua (strain Nepal516).